The sequence spans 458 residues: Divalent metal cation transporter MntH (458 aa).

Transmembrane regions (helical) follow at residues 38–58, 76–96, 119–139, 151–171, 180–200, 223–243, 275–295, 315–335, 370–390, 393–413, and 437–457; these read GFWK…VGYM, SLLS…AMAA, GGFL…AEII, MPLI…LLLM, AVVA…VILA, MLYL…LFLG, LTMA…LFFG, IVGA…LLAS, LMSV…EAKI, LLTF…IPLV, and FISG…LGFV.

Belongs to the NRAMP family.

The protein localises to the cell membrane. H(+)-stimulated, divalent metal cation uptake system. The polypeptide is Divalent metal cation transporter MntH (Lacticaseibacillus paracasei (strain ATCC 334 / BCRC 17002 / CCUG 31169 / CIP 107868 / KCTC 3260 / NRRL B-441) (Lactobacillus paracasei)).